The primary structure comprises 985 residues: Ephrin type-B receptor 1-A (985 aa).

An N-terminal signal peptide occupies residues 1-19 (MELNVLLLLLCLSGGQVGA). Topologically, residues 20–542 (VEETLMDTRT…YKSELREQLP (523 aa)) are extracellular. An Eph LBD domain is found at 21 to 203 (EETLMDTRTA…FFKEMPSVVQ (183 aa)). 2 consecutive Fibronectin type-III domains span residues 324-434 (VPSG…TNQA) and 435-532 (APSS…TAED). Residues N336, N428, and N482 are each glycosylated (N-linked (GlcNAc...) asparagine). The chain crosses the membrane as a helical span at residues 543–563 (LTGSAAAGVVFIVSLVAISIV). Topologically, residues 564–985 (CSRKRTYSKE…QITQSPTSIA (422 aa)) are cytoplasmic. Positions 620–883 (VKIEEVIGAG…EIVNTLRPMI (264 aa)) constitute a Protein kinase domain. Residues 626-634 (IGAGEFGEV) and K652 contribute to the ATP site. The active-site Proton acceptor is D745. In terms of domain architecture, SAM spans 912-976 (SAFTSVDDWL…LNSIQSMRVQ (65 aa)). A PDZ-binding motif is present at residues 983–985 (SIA).

This sequence belongs to the protein kinase superfamily. Tyr protein kinase family. Ephrin receptor subfamily. Heterotetramer upon binding of the ligand. The heterotetramer is composed of an ephrin dimer and a receptor dimer. Oligomerization is probably required to induce biological responses. Phosphorylated. Autophosphorylation is stimulated by ligands.

The protein resides in the cell membrane. It is found in the early endosome membrane. The protein localises to the cell projection. Its subcellular location is the dendrite. The catalysed reaction is L-tyrosyl-[protein] + ATP = O-phospho-L-tyrosyl-[protein] + ADP + H(+). In terms of biological role, receptor tyrosine kinase which binds promiscuously transmembrane ephrin-B family ligands residing on adjacent cells, leading to contact-dependent bidirectional signaling into neighboring cells. The signaling pathway downstream of the receptor is referred to as forward signaling while the signaling pathway downstream of the ephrin ligand is referred to as reverse signaling. May play a role in axon guidance during nervous system development. May also play an important redundant role with other ephrin-B receptors in development and maturation of dendritic spines and synapse formation. More generally, may play a role in targeted cell migration and adhesion. Upon activation by ephrin-B ligands activates the MAPK/ERK and the JNK signaling cascades to regulate cell migration and adhesion respectively. The chain is Ephrin type-B receptor 1-A (ephb1-a) from Xenopus laevis (African clawed frog).